The sequence spans 389 residues: MPYEKKAVHFGGGNIGRGFVAEFLHNSGYEVVFVDVMDSIIESLQKTSTYKVTEIGDDGEREFTIDHYRAINSKNEMDKVIEEIATADVVTCAVGPNILKFVAEPVAKAIEARKLDYPIAVIACENAINATTTWRGFIESKLSEETKKNIDSKARFANSAIDRIVPQQPPNAGLNVVIEKFHEWCVEQKPFENGGKKPDVKGIHYVDDLEPYIERKLFTVNTSHATAAYYGHQNKIAYIHEVLQDKKLHDIVRDAVKETANLIVKKHGVSTQEQSDYVEQIIKRISNPVLKDNVERVGRAPLRKLSRKERFIGPAAQLAERGESYQTLLGAVEQAYRFQNVEGDEESVELAKILKEHSPEEVVTKVNGIEKGHALFDPLVAIVKKVQGS.

7 to 18 lines the NAD(+) pocket; the sequence is AVHFGGGNIGRG. Lys216 is an active-site residue.

Belongs to the mannitol dehydrogenase family. In terms of assembly, monomer.

It catalyses the reaction D-mannitol 1-phosphate + NAD(+) = beta-D-fructose 6-phosphate + NADH + H(+). Its function is as follows. Catalyzes the NAD(H)-dependent interconversion of D-fructose 6-phosphate and D-mannitol 1-phosphate in the mannitol metabolic pathway. The protein is Mannitol-1-phosphate 5-dehydrogenase of Pyrenophora tritici-repentis (strain Pt-1C-BFP) (Wheat tan spot fungus).